Consider the following 193-residue polypeptide: Segregation and condensation protein B (193 aa).

Belongs to the ScpB family. In terms of assembly, homodimer. Homodimerization may be required to stabilize the binding of ScpA to the Smc head domains. Component of a cohesin-like complex composed of ScpA, ScpB and the Smc homodimer, in which ScpA and ScpB bind to the head domain of Smc. The presence of the three proteins is required for the association of the complex with DNA.

The protein resides in the cytoplasm. Participates in chromosomal partition during cell division. May act via the formation of a condensin-like complex containing Smc and ScpA that pull DNA away from mid-cell into both cell halves. The chain is Segregation and condensation protein B from Streptococcus thermophilus (strain ATCC BAA-250 / LMG 18311).